The sequence spans 135 residues: Phosphomevalonate dehydratase small subunit (135 aa).

Residue serine 67 is the Proton acceptor of the active site.

Belongs to the AcnX type II small subunit family. In terms of assembly, heterodimer composed of a large subunit (PMDh-L) and a small subunit (PMDh-S).

The catalysed reaction is (R)-5-phosphomevalonate = (2E)-3-methyl-5-phosphooxypent-2-enoate + H2O. The protein operates within isoprenoid biosynthesis; isopentenyl diphosphate biosynthesis via mevalonate pathway. In terms of biological role, component of a hydro-lyase that catalyzes the dehydration of mevalonate 5-phosphate (MVA5P) to form trans-anhydromevalonate 5-phosphate (tAHMP). Involved in the archaeal mevalonate (MVA) pathway, which provides fundamental precursors for isoprenoid biosynthesis, such as isopentenyl diphosphate (IPP) and dimethylallyl diphosphate (DMAPP). This Methanopyrus kandleri (strain AV19 / DSM 6324 / JCM 9639 / NBRC 100938) protein is Phosphomevalonate dehydratase small subunit.